A 760-amino-acid chain; its full sequence is Mitochondrial intermediate peptidase (760 aa).

Residues 1–19 (MLARSVRTLVVSPKTVFRF) constitute a mitochondrion transit peptide. His543 contributes to the Zn(2+) binding site. Residue Glu544 is part of the active site. His547 serves as a coordination point for Zn(2+).

It belongs to the peptidase M3 family. Zn(2+) is required as a cofactor.

The protein resides in the mitochondrion matrix. The enzyme catalyses Release of an N-terminal octapeptide as second stage of processing of some proteins imported into the mitochondrion.. Functionally, cleaves proteins, imported into the mitochondrion, to their mature size. While most mitochondrial precursor proteins are processed to the mature form in one step by mitochondrial processing peptidase (MPP), the sequential cleavage by MIP of an octapeptide after initial processing by MPP is a required step for a subgroup of nuclear-encoded precursor proteins destined for the matrix or the inner membrane. This is Mitochondrial intermediate peptidase (OCT1) from Leucoagaricus gongylophorus (Leaf-cutting ant fungus).